The primary structure comprises 390 residues: Branched-chain-amino-acid aminotransferase (390 aa).

An N6-(pyridoxal phosphate)lysine modification is found at Lys225.

Belongs to the class-IV pyridoxal-phosphate-dependent aminotransferase family. In terms of assembly, homodimer. Pyridoxal 5'-phosphate serves as cofactor.

The enzyme catalyses L-leucine + 2-oxoglutarate = 4-methyl-2-oxopentanoate + L-glutamate. The catalysed reaction is L-isoleucine + 2-oxoglutarate = (S)-3-methyl-2-oxopentanoate + L-glutamate. It catalyses the reaction L-valine + 2-oxoglutarate = 3-methyl-2-oxobutanoate + L-glutamate. Its function is as follows. Catalyzes the first reaction in the catabolism of the essential branched chain amino acids leucine, isoleucine, and valine. This is Branched-chain-amino-acid aminotransferase from Monosiga brevicollis (Choanoflagellate).